Here is a 675-residue protein sequence, read N- to C-terminus: UvrABC system protein B (675 aa).

In terms of domain architecture, Helicase ATP-binding spans 35 to 192 (QGMRDGLMYQ…ARLVAMQYTR (158 aa)). 48-55 (GVTGSGKT) provides a ligand contact to ATP. Residues 101-124 (YYDYYQPEAYVPTRDLFIEKDSSI) carry the Beta-hairpin motif. Residues 439–605 (QVDDLLGEIK…GVNKAVRELI (167 aa)) enclose the Helicase C-terminal domain. Residues 633–668 (AREIRRLEKLMTDHARNLEFEQAAAARDALNALKQR) form the UVR domain.

Belongs to the UvrB family. In terms of assembly, forms a heterotetramer with UvrA during the search for lesions. Interacts with UvrC in an incision complex.

The protein resides in the cytoplasm. The UvrABC repair system catalyzes the recognition and processing of DNA lesions. A damage recognition complex composed of 2 UvrA and 2 UvrB subunits scans DNA for abnormalities. Upon binding of the UvrA(2)B(2) complex to a putative damaged site, the DNA wraps around one UvrB monomer. DNA wrap is dependent on ATP binding by UvrB and probably causes local melting of the DNA helix, facilitating insertion of UvrB beta-hairpin between the DNA strands. Then UvrB probes one DNA strand for the presence of a lesion. If a lesion is found the UvrA subunits dissociate and the UvrB-DNA preincision complex is formed. This complex is subsequently bound by UvrC and the second UvrB is released. If no lesion is found, the DNA wraps around the other UvrB subunit that will check the other stand for damage. The polypeptide is UvrABC system protein B (Bordetella petrii (strain ATCC BAA-461 / DSM 12804 / CCUG 43448)).